Consider the following 61-residue polypeptide: Large ribosomal subunit protein uL30 (61 aa).

The protein belongs to the universal ribosomal protein uL30 family. As to quaternary structure, part of the 50S ribosomal subunit.

The polypeptide is Large ribosomal subunit protein uL30 (Maricaulis maris (strain MCS10) (Caulobacter maris)).